The sequence spans 120 residues: Large ribosomal subunit protein uL24 (120 aa).

A disordered region spans residues 1–33 (MTRQPHKQRNRQERAALHEKQKQVRAPLSPELR). The span at 10–22 (NRQERAALHEKQK) shows a compositional bias: basic and acidic residues.

It belongs to the universal ribosomal protein uL24 family. As to quaternary structure, part of the 50S ribosomal subunit.

One of two assembly initiator proteins, it binds directly to the 5'-end of the 23S rRNA, where it nucleates assembly of the 50S subunit. Functionally, located at the polypeptide exit tunnel on the outside of the subunit. This is Large ribosomal subunit protein uL24 from Natronomonas pharaonis (strain ATCC 35678 / DSM 2160 / CIP 103997 / JCM 8858 / NBRC 14720 / NCIMB 2260 / Gabara) (Halobacterium pharaonis).